Reading from the N-terminus, the 105-residue chain is DNA-binding transcriptional regulator BolA (105 aa).

This sequence belongs to the BolA/IbaG family.

In terms of biological role, transcriptional regulator that plays an important role in general stress response. Has many effects on cell morphology, cell growth and cell division. Acts by regulating the transcription of many genes, including dacA (PBP-5), dacC (PBP-6), ampC and mreB. Probably involved in the coordination of genes that adapt the cell physiology in order to enhance cell adaptation and survival under stress conditions. Essential for normal cell morphology in stationary phase and under conditions of starvation. Also regulates a complex network of genes encoding proteins related to biofilm development, and negatively modulates flagellar biosynthesis and swimming capacity. Could be a motile/adhesive transcriptional switch, specifically involved in the transition between the planktonic and the attachment stage of biofilm formation. Overexpression produces round cell shape, impairs cell growth rate and induces biofilm development. The polypeptide is DNA-binding transcriptional regulator BolA (Escherichia coli (strain K12)).